The chain runs to 77 residues: Large ribosomal subunit protein uL29 (77 aa).

This sequence belongs to the universal ribosomal protein uL29 family.

This chain is Large ribosomal subunit protein uL29, found in Mycolicibacterium gilvum (strain PYR-GCK) (Mycobacterium gilvum (strain PYR-GCK)).